A 67-amino-acid chain; its full sequence is DNA-directed RNA polymerase subunit omega (67 aa).

This sequence belongs to the RNA polymerase subunit omega family. The RNAP catalytic core consists of 2 alpha, 1 beta, 1 beta' and 1 omega subunit. When a sigma factor is associated with the core the holoenzyme is formed, which can initiate transcription.

The catalysed reaction is RNA(n) + a ribonucleoside 5'-triphosphate = RNA(n+1) + diphosphate. Promotes RNA polymerase assembly. Latches the N- and C-terminal regions of the beta' subunit thereby facilitating its interaction with the beta and alpha subunits. The polypeptide is DNA-directed RNA polymerase subunit omega (Ralstonia pickettii (strain 12J)).